The sequence spans 364 residues: Probable dual-specificity RNA methyltransferase RlmN (364 aa).

The active-site Proton acceptor is the Glu106. Residues 112 to 351 (YPHRNTVCIS…CTVRDTRGRE (240 aa)) form the Radical SAM core domain. A disulfide bridge links Cys119 with Cys356. Residues Cys126, Cys130, and Cys133 each contribute to the [4Fe-4S] cluster site. Residues 177–178 (GE), Ser211, 234–236 (SLH), and Asn313 each bind S-adenosyl-L-methionine. The active-site S-methylcysteine intermediate is Cys356.

The protein belongs to the radical SAM superfamily. RlmN family. [4Fe-4S] cluster is required as a cofactor.

It localises to the cytoplasm. The enzyme catalyses adenosine(2503) in 23S rRNA + 2 reduced [2Fe-2S]-[ferredoxin] + 2 S-adenosyl-L-methionine = 2-methyladenosine(2503) in 23S rRNA + 5'-deoxyadenosine + L-methionine + 2 oxidized [2Fe-2S]-[ferredoxin] + S-adenosyl-L-homocysteine. The catalysed reaction is adenosine(37) in tRNA + 2 reduced [2Fe-2S]-[ferredoxin] + 2 S-adenosyl-L-methionine = 2-methyladenosine(37) in tRNA + 5'-deoxyadenosine + L-methionine + 2 oxidized [2Fe-2S]-[ferredoxin] + S-adenosyl-L-homocysteine. Functionally, specifically methylates position 2 of adenine 2503 in 23S rRNA and position 2 of adenine 37 in tRNAs. In Mycolicibacterium paratuberculosis (strain ATCC BAA-968 / K-10) (Mycobacterium paratuberculosis), this protein is Probable dual-specificity RNA methyltransferase RlmN.